A 188-amino-acid chain; its full sequence is NAD(P)H-quinone oxidoreductase subunit J (188 aa).

This sequence belongs to the complex I 30 kDa subunit family. In terms of assembly, NDH-1 can be composed of about 15 different subunits; different subcomplexes with different compositions have been identified which probably have different functions.

Its subcellular location is the cellular thylakoid membrane. It catalyses the reaction a plastoquinone + NADH + (n+1) H(+)(in) = a plastoquinol + NAD(+) + n H(+)(out). The catalysed reaction is a plastoquinone + NADPH + (n+1) H(+)(in) = a plastoquinol + NADP(+) + n H(+)(out). Functionally, NDH-1 shuttles electrons from an unknown electron donor, via FMN and iron-sulfur (Fe-S) centers, to quinones in the respiratory and/or the photosynthetic chain. The immediate electron acceptor for the enzyme in this species is believed to be plastoquinone. Couples the redox reaction to proton translocation, and thus conserves the redox energy in a proton gradient. Cyanobacterial NDH-1 also plays a role in inorganic carbon-concentration. This is NAD(P)H-quinone oxidoreductase subunit J from Parasynechococcus marenigrum (strain WH8102).